A 137-amino-acid chain; its full sequence is Prostate and testis expressed protein 13 (137 aa).

The first 20 residues, methionine 1 to arginine 20, serve as a signal peptide directing secretion. The UPAR/Ly6 domain maps to arginine 28–glycine 114. 5 cysteine pairs are disulfide-bonded: cysteine 30-cysteine 60, cysteine 33-cysteine 41, cysteine 48-cysteine 84, cysteine 87-cysteine 104, and cysteine 105-cysteine 111. Asparagine 57 carries an N-linked (GlcNAc...) asparagine glycan.

It belongs to the PATE family. As to expression, strongly expressed in the epididymis, including the initial segment, caput, corpus and cauda regions. Weakly expressed in prostate.

Its subcellular location is the secreted. The chain is Prostate and testis expressed protein 13 from Mus musculus (Mouse).